The following is a 340-amino-acid chain: Mitochondrial distribution and morphology protein 12 (340 aa).

The SMP-LTD domain occupies 1-321; the sequence is MSIDLDWDGM…WPSWIKVSME (321 aa). Disordered regions lie at residues 79–107, 161–184, and 319–340; these read HYLP…TNPI, SVRE…EDRE, and SMED…EDEH. Polar residues predominate over residues 89 to 106; the sequence is QRRSAPSTPHIHTNTTNP. The segment covering 321–340 has biased composition (acidic residues); sequence EDEDSDDEEGEEEGDQEDEH.

The protein belongs to the MDM12 family. As to quaternary structure, component of the ER-mitochondria encounter structure (ERMES) or MDM complex, composed of MMM1, MDM10, MDM12 and MDM34. An MMM1 homodimer associates with one molecule of MDM12 on each side in a pairwise head-to-tail manner, and the SMP-LTD domains of MMM1 and MDM12 generate a continuous hydrophobic tunnel for phospholipid trafficking.

The protein resides in the mitochondrion outer membrane. The protein localises to the endoplasmic reticulum membrane. Functionally, component of the ERMES/MDM complex, which serves as a molecular tether to connect the endoplasmic reticulum (ER) and mitochondria. Components of this complex are involved in the control of mitochondrial shape and protein biogenesis, and function in nonvesicular lipid trafficking between the ER and mitochondria. MDM12 is required for the interaction of the ER-resident membrane protein MMM1 and the outer mitochondrial membrane-resident beta-barrel protein MDM10. The MDM12-MMM1 subcomplex functions in the major beta-barrel assembly pathway that is responsible for biogenesis of all mitochondrial outer membrane beta-barrel proteins, and acts in a late step after the SAM complex. The MDM10-MDM12-MMM1 subcomplex further acts in the TOM40-specific pathway after the action of the MDM12-MMM1 complex. Essential for establishing and maintaining the structure of mitochondria and maintenance of mtDNA nucleoids. This chain is Mitochondrial distribution and morphology protein 12, found in Yarrowia lipolytica (strain CLIB 122 / E 150) (Yeast).